The following is a 71-amino-acid chain: Antitoxin VapB22 (71 aa).

The protein belongs to the phD/YefM antitoxin family.

In terms of biological role, antitoxin component of a type II toxin-antitoxin (TA) system. Upon expression in M.smegmatis neutralizes the effect of cognate toxin VapC22. This Mycobacterium tuberculosis (strain ATCC 25618 / H37Rv) protein is Antitoxin VapB22 (vapB22).